Here is a 430-residue protein sequence, read N- to C-terminus: UDP-N-acetylmuramoylalanine--D-glutamate ligase (430 aa).

109 to 115 lines the ATP pocket; sequence GTDGKST.

The protein belongs to the MurCDEF family.

The protein localises to the cytoplasm. It carries out the reaction UDP-N-acetyl-alpha-D-muramoyl-L-alanine + D-glutamate + ATP = UDP-N-acetyl-alpha-D-muramoyl-L-alanyl-D-glutamate + ADP + phosphate + H(+). Its pathway is cell wall biogenesis; peptidoglycan biosynthesis. In terms of biological role, cell wall formation. Catalyzes the addition of glutamate to the nucleotide precursor UDP-N-acetylmuramoyl-L-alanine (UMA). The protein is UDP-N-acetylmuramoylalanine--D-glutamate ligase of Thermotoga petrophila (strain ATCC BAA-488 / DSM 13995 / JCM 10881 / RKU-1).